A 136-amino-acid chain; its full sequence is Small ribosomal subunit protein uS9 (136 aa).

A disordered region spans residues 97 to 136 (SPDNRKPLKTEGHLSRDPRAKERRKYGLKKARKAPQFSKR). Positions 98–116 (PDNRKPLKTEGHLSRDPRA) are enriched in basic and acidic residues. Residues 117-136 (KERRKYGLKKARKAPQFSKR) show a composition bias toward basic residues.

This sequence belongs to the universal ribosomal protein uS9 family.

This chain is Small ribosomal subunit protein uS9, found in Prochlorococcus marinus (strain MIT 9215).